A 2543-amino-acid chain; its full sequence is Polyketide synthase PksR (2543 aa).

Residues 165 to 269 (LEIGAGTGGT…KAVLKKNGLL (105 aa)) form a methyltransferase region. Residues 376–452 (SLIEQTAQFV…ELVEYLVKGH (77 aa)) form the Carrier 1 domain. O-(pantetheine 4'-phosphoryl)serine is present on serine 413. The disordered stretch occupies residues 465–485 (TKPAKNEAPLQTERTDPNKPF). The Ketosynthase family 3 (KS3) 1 domain occupies 527–959 (TEDIAIIGVS…GAYANLIIEE (433 aa)). Cysteine 700 serves as the catalytic For beta-ketoacyl synthase 1 activity. Residues 1114-1242 (HFDVSSINEK…GQCGIGSFEP (129 aa)) are N-terminal hotdog fold. Residues 1114–1397 (HFDVSSINEK…LKQLRISNQR (284 aa)) form the PKS/mFAS DH domain. A C-terminal hotdog fold region spans residues 1255–1397 (TKLHHIDQMY…LKQLRISNQR (143 aa)). In terms of domain architecture, Carrier 2 spans 1407–1485 (SNLKARIRSY…ELIDFFADKH (79 aa)). Serine 1445 is modified (O-(pantetheine 4'-phosphoryl)serine). One can recognise a Ketosynthase family 3 (KS3) 2 domain in the interval 1528-1946 (ADGIAIIGMS…GVNAHVILEE (419 aa)). Active-site for beta-ketoacyl synthase 2 activity residues include cysteine 1680, histidine 1815, and histidine 1862. The Carrier 3 domain maps to 2134 to 2208 (RINNSSDHHI…DMMDLIAKKQ (75 aa)). Serine 2168 carries the post-translational modification O-(pantetheine 4'-phosphoryl)serine. The interval 2234–2514 (RPVFWFHGGV…EFCEKLYSNR (281 aa)) is thioesterase.

Requires pantetheine 4'-phosphate as cofactor.

The protein localises to the cytoplasm. The protein operates within antibiotic biosynthesis; bacillaene biosynthesis. Involved in some intermediate steps for the synthesis of the antibiotic polyketide bacillaene which is involved in secondary metabolism. This chain is Polyketide synthase PksR (pksR), found in Bacillus subtilis (strain 168).